Consider the following 157-residue polypeptide: Dihydrofolate reductase type 15 (157 aa).

One can recognise a DHFR domain in the interval 2–156 (KLSLMAAISK…INYSYQIWQK (155 aa)).

This sequence belongs to the dihydrofolate reductase family. In terms of assembly, homodimer.

The enzyme catalyses (6S)-5,6,7,8-tetrahydrofolate + NADP(+) = 7,8-dihydrofolate + NADPH + H(+). It functions in the pathway cofactor biosynthesis; tetrahydrofolate biosynthesis; 5,6,7,8-tetrahydrofolate from 7,8-dihydrofolate: step 1/1. In terms of biological role, key enzyme in folate metabolism. Catalyzes an essential reaction for de novo glycine and purine synthesis, and for DNA precursor synthesis. The chain is Dihydrofolate reductase type 15 (dhfrXV) from Escherichia coli.